Here is a 99-residue protein sequence, read N- to C-terminus: Large ribosomal subunit protein uL23 (99 aa).

It belongs to the universal ribosomal protein uL23 family. As to quaternary structure, part of the 50S ribosomal subunit. Contacts protein L29, and trigger factor when it is bound to the ribosome.

Its function is as follows. One of the early assembly proteins it binds 23S rRNA. One of the proteins that surrounds the polypeptide exit tunnel on the outside of the ribosome. Forms the main docking site for trigger factor binding to the ribosome. The protein is Large ribosomal subunit protein uL23 of Streptococcus suis (strain 98HAH33).